A 451-amino-acid chain; its full sequence is Proline--tRNA ligase (451 aa).

This sequence belongs to the class-II aminoacyl-tRNA synthetase family. ProS type 2 subfamily. As to quaternary structure, homodimer.

The protein resides in the cytoplasm. The catalysed reaction is tRNA(Pro) + L-proline + ATP = L-prolyl-tRNA(Pro) + AMP + diphosphate. Catalyzes the attachment of proline to tRNA(Pro) in a two-step reaction: proline is first activated by ATP to form Pro-AMP and then transferred to the acceptor end of tRNA(Pro). This chain is Proline--tRNA ligase, found in Roseobacter denitrificans (strain ATCC 33942 / OCh 114) (Erythrobacter sp. (strain OCh 114)).